A 123-amino-acid chain; its full sequence is Small ribosomal subunit protein uS12 (123 aa).

Residues 1-28 (MPTIQQLIRKPRQPKVKRSKSMHLEQCP) are disordered. Positions 9 to 21 (RKPRQPKVKRSKS) are enriched in basic residues. D89 bears the 3-methylthioaspartic acid mark.

The protein belongs to the universal ribosomal protein uS12 family. Part of the 30S ribosomal subunit. Contacts proteins S8 and S17. May interact with IF1 in the 30S initiation complex.

In terms of biological role, with S4 and S5 plays an important role in translational accuracy. Functionally, interacts with and stabilizes bases of the 16S rRNA that are involved in tRNA selection in the A site and with the mRNA backbone. Located at the interface of the 30S and 50S subunits, it traverses the body of the 30S subunit contacting proteins on the other side and probably holding the rRNA structure together. The combined cluster of proteins S8, S12 and S17 appears to hold together the shoulder and platform of the 30S subunit. The sequence is that of Small ribosomal subunit protein uS12 from Ruegeria sp. (strain TM1040) (Silicibacter sp.).